A 121-amino-acid polypeptide reads, in one-letter code: MTVFLPILVCLCGGVGASCRYLLDVTIKTYWQRAFPLSTFTINLIAGFLAGLVAALALGGTLDEPWRLVLATGFLGGFSTFSTAINEMVTLFRKHRYPTAAAYLVLSLGVPVVAAACGFLV.

4 helical membrane passes run 3 to 23, 40 to 60, 69 to 89, and 101 to 121; these read VFLP…RYLL, FTIN…ALGG, VLAT…NEMV, and AAYL…GFLV. Residues glycine 76 and serine 79 each contribute to the Na(+) site.

Belongs to the fluoride channel Fluc/FEX (TC 1.A.43) family.

It is found in the cell membrane. It carries out the reaction fluoride(in) = fluoride(out). Na(+) is not transported, but it plays an essential structural role and its presence is essential for fluoride channel function. In terms of biological role, fluoride-specific ion channel. Important for reducing fluoride concentration in the cell, thus reducing its toxicity. The polypeptide is Fluoride-specific ion channel FluC 3 (Bifidobacterium longum (strain NCC 2705)).